We begin with the raw amino-acid sequence, 156 residues long: ATP synthase subunit b (156 aa).

A helical membrane pass occupies residues 12–32; the sequence is VAFFIFVLFCMKFVWPPVIAA.

The protein belongs to the ATPase B chain family. F-type ATPases have 2 components, F(1) - the catalytic core - and F(0) - the membrane proton channel. F(1) has five subunits: alpha(3), beta(3), gamma(1), delta(1), epsilon(1). F(0) has three main subunits: a(1), b(2) and c(10-14). The alpha and beta chains form an alternating ring which encloses part of the gamma chain. F(1) is attached to F(0) by a central stalk formed by the gamma and epsilon chains, while a peripheral stalk is formed by the delta and b chains.

Its subcellular location is the cell inner membrane. In terms of biological role, f(1)F(0) ATP synthase produces ATP from ADP in the presence of a proton or sodium gradient. F-type ATPases consist of two structural domains, F(1) containing the extramembraneous catalytic core and F(0) containing the membrane proton channel, linked together by a central stalk and a peripheral stalk. During catalysis, ATP synthesis in the catalytic domain of F(1) is coupled via a rotary mechanism of the central stalk subunits to proton translocation. Its function is as follows. Component of the F(0) channel, it forms part of the peripheral stalk, linking F(1) to F(0). This Pseudomonas syringae pv. syringae (strain B728a) protein is ATP synthase subunit b.